A 479-amino-acid polypeptide reads, in one-letter code: mRNA export factor ICP27 homolog (479 aa).

Residues 1–15 (MVPSQRLSRTSSISS) show a composition bias toward low complexity. Disordered regions lie at residues 1–78 (MVPS…SSVV) and 92–210 (KWDL…NKPW). A compositionally biased stretch (acidic residues) spans 35-44 (TDCDMDPMEG). A compositionally biased stretch (basic and acidic residues) spans 132 to 142 (EVHGCTDESYG). The Zn(2+) site is built by cysteine 354, histidine 445, cysteine 449, and cysteine 454. The CHC2-type zinc finger occupies 354–454 (CFLPNTRDYN…HTRDCRSASC (101 aa)).

It belongs to the HHV-1 ICP27 protein family. In terms of assembly, interacts with host XPO1 and with the XPO1 export pathway components small GTPase RAN and nucleoporin NUP214. Interacts with host SPEN, OTT1 and OTT3. Interacts with host SRSF1, SRSF3, SRSF7 and SRPK1. Interacts with host DHX9; this interaction may have an inhibitory effect on virion production. Interacts (via N-terminus) with host NXF1; this interaction plays a role in mRNA export. Phosphorylated by cellular protein kinase CK2.

It is found in the host nucleus. The protein resides in the host cytoplasm. In terms of biological role, promotes the nuclear export of a subset of early and late viral mRNAs by interacting with mRNAs and cellular export proteins. Additionally may prevent the establishment of cellular antiviral state, by acting as an alternative splicing factor for cellular RNAs such as STAT1, resulting in a STAT1 mRNA incapable of producing the STAT1alpha isoform. The polypeptide is mRNA export factor ICP27 homolog (Homo sapiens (Human)).